The following is an 827-amino-acid chain: Ribosome biogenesis protein ERB1 (827 aa).

The disordered stretch occupies residues 1-129 (MVHSKKDKSV…DFSDDNDTRP (129 aa)). Residues 7-18 (DKSVMKHSDIKK) are compositionally biased toward basic and acidic residues. The segment covering 45-60 (CDSDDDEEFQSAEEEV) has biased composition (acidic residues). Residues 61–77 (LSSGSESSSKEGSTPGS) show a composition bias toward low complexity. 2 stretches are compositionally biased toward acidic residues: residues 81-99 (GSDE…DEDA) and 108-124 (EEGD…FSDD). The interval 291 to 409 (RFVPSKHEAK…LRKVPGYGES (119 aa)) is required for interaction with NOP7. The segment at 409-445 (SVRERFERSLDLYLAPRVRKNKLNIDPESLIPELPSP) is required for interaction with YTM1. WD repeat units follow at residues 461-500 (GHKG…EVYK), 509-549 (NQDD…FEVE), 657-695 (KSKG…LVKK), 698-737 (PGAR…TPYK), 741-780 (YHEK…DMMK), and 796-827 (VNSL…LWTT).

The protein belongs to the WD repeat BOP1/ERB1 family. Component of the NOP7 complex, composed of ERB1, NOP7 and YTM1. The complex is held together by ERB1, which interacts with NOP7 via its N-terminal domain and with YTM1 via a high-affinity interaction between the seven-bladed beta-propeller domains of the 2 proteins. The NOP7 complex associates with the 66S pre-ribosome.

It is found in the nucleus. It localises to the nucleolus. The protein resides in the nucleoplasm. In terms of biological role, component of the NOP7 complex, which is required for maturation of the 25S and 5.8S ribosomal RNAs and formation of the 60S ribosome. This is Ribosome biogenesis protein ERB1 from Eremothecium gossypii (strain ATCC 10895 / CBS 109.51 / FGSC 9923 / NRRL Y-1056) (Yeast).